The chain runs to 401 residues: Tryptophan synthase beta chain (401 aa).

Position 92 is an N6-(pyridoxal phosphate)lysine (Lys92).

The protein belongs to the TrpB family. In terms of assembly, tetramer of two alpha and two beta chains. Pyridoxal 5'-phosphate serves as cofactor.

The enzyme catalyses (1S,2R)-1-C-(indol-3-yl)glycerol 3-phosphate + L-serine = D-glyceraldehyde 3-phosphate + L-tryptophan + H2O. It functions in the pathway amino-acid biosynthesis; L-tryptophan biosynthesis; L-tryptophan from chorismate: step 5/5. The beta subunit is responsible for the synthesis of L-tryptophan from indole and L-serine. The chain is Tryptophan synthase beta chain from Vesicomyosocius okutanii subsp. Calyptogena okutanii (strain HA).